We begin with the raw amino-acid sequence, 413 residues long: Glucose-1-phosphatase (413 aa).

Positions 1 to 22 are cleaved as a signal peptide; the sequence is MKKSLLAVAVAGAVLLSSAVQA. A substrate-binding site is contributed by arginine 39. The active-site Nucleophile is the histidine 40. Substrate contacts are provided by arginine 43, arginine 116, and glutamate 218. Aspartate 312 acts as the Proton donor in catalysis.

The protein belongs to the histidine acid phosphatase family. In terms of assembly, homodimer.

The protein resides in the periplasm. It catalyses the reaction alpha-D-glucose 1-phosphate + H2O = D-glucose + phosphate. This Salmonella typhimurium (strain LT2 / SGSC1412 / ATCC 700720) protein is Glucose-1-phosphatase (agp).